Consider the following 174-residue polypeptide: MLDREGYRPNVGIILINERNEVFWGKRVREHSWQFPQGGIKPGESPETAMYRELYEEVGLLPQHVKIVGRTRDWLRYDVPNNWVRREWRGSYRGQKQIWYLLRLTGRDCDVNLRATRHPEFDGWRWHQYWAPVDEVIEFKRDVYLGALKELSSRFLRGMESYEDFAARQPSGNR.

The 144-residue stretch at 6–149 folds into the Nudix hydrolase domain; the sequence is GYRPNVGIIL…KRDVYLGALK (144 aa). Residues 38–59 carry the Nudix box motif; it reads GGIKPGESPETAMYRELYEEVG.

The protein belongs to the Nudix hydrolase family. RppH subfamily. A divalent metal cation serves as cofactor.

Functionally, accelerates the degradation of transcripts by removing pyrophosphate from the 5'-end of triphosphorylated RNA, leading to a more labile monophosphorylated state that can stimulate subsequent ribonuclease cleavage. In Neisseria meningitidis serogroup C (strain 053442), this protein is RNA pyrophosphohydrolase.